Reading from the N-terminus, the 194-residue chain is GTP cyclohydrolase-2 (194 aa).

50 to 54 (RIHSE) is a GTP binding site. 3 residues coordinate Zn(2+): C55, C66, and C68. GTP is bound by residues 94 to 96 (EGR) and T116. D128 acts as the Proton acceptor in catalysis. R130 acts as the Nucleophile in catalysis. Positions 151 and 156 each coordinate GTP.

It belongs to the GTP cyclohydrolase II family. Zn(2+) is required as a cofactor.

It carries out the reaction GTP + 4 H2O = 2,5-diamino-6-hydroxy-4-(5-phosphoribosylamino)-pyrimidine + formate + 2 phosphate + 3 H(+). Its pathway is cofactor biosynthesis; riboflavin biosynthesis; 5-amino-6-(D-ribitylamino)uracil from GTP: step 1/4. In terms of biological role, catalyzes the conversion of GTP to 2,5-diamino-6-ribosylamino-4(3H)-pyrimidinone 5'-phosphate (DARP), formate and pyrophosphate. The sequence is that of GTP cyclohydrolase-2 from Helicobacter hepaticus (strain ATCC 51449 / 3B1).